The following is a 103-amino-acid chain: MTALSRLAATVEARKGADPESSWTAKLFAKGPEKCAEKFGEEAVEAIIAAVKNDRANLVYEAADVLYHLTVMLAARDVSLDEVLAELDRRAGTSGIAEKAARG.

The protein belongs to the PRA-PH family.

It localises to the cytoplasm. It catalyses the reaction 1-(5-phospho-beta-D-ribosyl)-ATP + H2O = 1-(5-phospho-beta-D-ribosyl)-5'-AMP + diphosphate + H(+). Its pathway is amino-acid biosynthesis; L-histidine biosynthesis; L-histidine from 5-phospho-alpha-D-ribose 1-diphosphate: step 2/9. This chain is Phosphoribosyl-ATP pyrophosphatase (hisE), found in Rhodobacter capsulatus (strain ATCC BAA-309 / NBRC 16581 / SB1003).